The chain runs to 1545 residues: Tricalbin-3 (1545 aa).

Residues 1–89 (MTGIKAQVHP…SNPEGKKQSS (89 aa)) are disordered. The Cytoplasmic segment spans residues 1–206 (MTGIKAQVHP…AYILENFYND (206 aa)). Over residues 62-80 (TKTSNSVSDVSKGQKTADS) the composition is skewed to polar residues. 2 positions are modified to phosphoserine: S67 and S112. The helical transmembrane segment at 207 to 227 (WYCNIATVLGTCFFSWLFAYI) threads the bilayer. G228 is a topological domain (extracellular). Residues 229 to 249 (FSWWSMIFIFLGTATVYNAEY) form a helical membrane-spanning segment. Residues 250–1545 (TRFNRNIRDD…VPEVPQEYTQ (1296 aa)) are Cytoplasmic-facing. The region spanning 272–479 (RVESTTWLNS…PPNHLDINVE (208 aa)) is the SMP-LTD domain. Residues 470-596 (PPNHLDINVE…LQNPVLDNQT (127 aa)) form the C2 1 domain. The stretch at 620–660 (EDKSEEKAVERAEAKAKGKKEDENEDTTEKEEDENEESSQT) forms a coiled coil. The segment covering 624 to 641 (EEKAVERAEAKAKGKKED) has biased composition (basic and acidic residues). The interval 624–660 (EEKAVERAEAKAKGKKEDENEDTTEKEEDENEESSQT) is disordered. Positions 642 to 658 (ENEDTTEKEEDENEESS) are enriched in acidic residues. C2 domains are found at residues 646-763 (TTEK…AQEF) and 783-897 (MTGA…SGKY). The stretch at 937 to 972 (SPEELVNVEKLEKELKEKKKKFEATQEENEQEMEKN) forms a coiled coil. In terms of domain architecture, C2 4 spans 1119–1234 (PTSVKLPSSE…EVGKTYNWNL (116 aa)). D1150, D1156, D1204, D1206, and D1212 together coordinate Ca(2+). The tract at residues 1304–1404 (LLKSLGGNPM…NSRGHSRASS (101 aa)) is disordered. A compositionally biased stretch (polar residues) spans 1318–1328 (SSNGNESNGAK). Residues 1329–1340 (KSSEKKSFDRRS) are compositionally biased toward basic and acidic residues. S1340, S1342, and S1346 each carry phosphoserine. Polar residues predominate over residues 1341-1351 (PSNLNSTSVTP). T1350 bears the Phosphothreonine mark. S1354 carries the post-translational modification Phosphoserine. Polar residues predominate over residues 1361 to 1373 (VPNTSYAPVQSAS). Low complexity predominate over residues 1377–1404 (KPTDNTSSSSNKKDTPSSNSRGHSRASS). One can recognise a C2 5 domain in the interval 1396 to 1514 (SRGHSRASSF…QQDGQISVKL (119 aa)). At S1400 the chain carries Phosphoserine.

Belongs to the tricalbin family. As to quaternary structure, interacts with TCB2 via its C-terminal domain. Requires Ca(2+) as cofactor.

The protein localises to the cell membrane. The protein resides in the endoplasmic reticulum membrane. In terms of biological role, may play a role in membrane trafficking. The protein is Tricalbin-3 (TCB3) of Saccharomyces cerevisiae (strain ATCC 204508 / S288c) (Baker's yeast).